We begin with the raw amino-acid sequence, 282 residues long: Acetyl-coenzyme A carboxylase carboxyl transferase subunit beta (282 aa).

Residues 28 to 282 (IMTKCPSCRT…TKILDIHHVS (255 aa)) enclose the CoA carboxyltransferase N-terminal domain. Residues cysteine 32, cysteine 35, cysteine 51, and cysteine 54 each coordinate Zn(2+). A C4-type zinc finger spans residues 32–54 (CPSCRTIMYTKELKKNLYVCDSC).

This sequence belongs to the AccD/PCCB family. In terms of assembly, acetyl-CoA carboxylase is a heterohexamer composed of biotin carboxyl carrier protein (AccB), biotin carboxylase (AccC) and two subunits each of ACCase subunit alpha (AccA) and ACCase subunit beta (AccD). Requires Zn(2+) as cofactor.

It localises to the cytoplasm. The catalysed reaction is N(6)-carboxybiotinyl-L-lysyl-[protein] + acetyl-CoA = N(6)-biotinyl-L-lysyl-[protein] + malonyl-CoA. The protein operates within lipid metabolism; malonyl-CoA biosynthesis; malonyl-CoA from acetyl-CoA: step 1/1. Its function is as follows. Component of the acetyl coenzyme A carboxylase (ACC) complex. Biotin carboxylase (BC) catalyzes the carboxylation of biotin on its carrier protein (BCCP) and then the CO(2) group is transferred by the transcarboxylase to acetyl-CoA to form malonyl-CoA. This Halalkalibacterium halodurans (strain ATCC BAA-125 / DSM 18197 / FERM 7344 / JCM 9153 / C-125) (Bacillus halodurans) protein is Acetyl-coenzyme A carboxylase carboxyl transferase subunit beta.